A 269-amino-acid chain; its full sequence is MTLNERIAELRERVRQQRPLIHHITNFVVMNDTANVTLHIGGLPVMAHDRAEVAEMVTAAGALVLNVGTLSPDWIEAMLIAGRRANELGIPIVLDPVGAGATSLRTASNRRLLEELQIAVVRGNSGEIGALAGMGGVVKGVETVVEVDDPTAAAKALAQQYRTVVAVTGRQDVVTDGKRVFLVDNGHEWLKTLTGTGCSATTVIAAFAAVEREYPFAAAAALACFGLAAELAAPAARGPASFKVAFYDAIYHLSADQIRAGARVTAVAG.

Met-46 contacts substrate. ATP contacts are provided by Arg-122 and Thr-168. Gly-195 provides a ligand contact to substrate.

The protein belongs to the Thz kinase family. Requires Mg(2+) as cofactor.

It catalyses the reaction 5-(2-hydroxyethyl)-4-methylthiazole + ATP = 4-methyl-5-(2-phosphooxyethyl)-thiazole + ADP + H(+). It functions in the pathway cofactor biosynthesis; thiamine diphosphate biosynthesis; 4-methyl-5-(2-phosphoethyl)-thiazole from 5-(2-hydroxyethyl)-4-methylthiazole: step 1/1. Catalyzes the phosphorylation of the hydroxyl group of 4-methyl-5-beta-hydroxyethylthiazole (THZ). The sequence is that of Hydroxyethylthiazole kinase from Chloroflexus aurantiacus (strain ATCC 29366 / DSM 635 / J-10-fl).